The following is a 241-amino-acid chain: Aspartate/glutamate leucyltransferase (241 aa).

It belongs to the R-transferase family. Bpt subfamily.

It is found in the cytoplasm. The enzyme catalyses N-terminal L-glutamyl-[protein] + L-leucyl-tRNA(Leu) = N-terminal L-leucyl-L-glutamyl-[protein] + tRNA(Leu) + H(+). The catalysed reaction is N-terminal L-aspartyl-[protein] + L-leucyl-tRNA(Leu) = N-terminal L-leucyl-L-aspartyl-[protein] + tRNA(Leu) + H(+). Its function is as follows. Functions in the N-end rule pathway of protein degradation where it conjugates Leu from its aminoacyl-tRNA to the N-termini of proteins containing an N-terminal aspartate or glutamate. The polypeptide is Aspartate/glutamate leucyltransferase (Helicobacter hepaticus (strain ATCC 51449 / 3B1)).